A 287-amino-acid polypeptide reads, in one-letter code: 4-diphosphocytidyl-2-C-methyl-D-erythritol kinase (287 aa).

Lysine 22 is a catalytic residue. 102–112 is an ATP binding site; it reads PAAAGIGGGSS. Aspartate 139 is an active-site residue.

The protein belongs to the GHMP kinase family. IspE subfamily.

It catalyses the reaction 4-CDP-2-C-methyl-D-erythritol + ATP = 4-CDP-2-C-methyl-D-erythritol 2-phosphate + ADP + H(+). Its pathway is isoprenoid biosynthesis; isopentenyl diphosphate biosynthesis via DXP pathway; isopentenyl diphosphate from 1-deoxy-D-xylulose 5-phosphate: step 3/6. In terms of biological role, catalyzes the phosphorylation of the position 2 hydroxy group of 4-diphosphocytidyl-2C-methyl-D-erythritol. This chain is 4-diphosphocytidyl-2-C-methyl-D-erythritol kinase, found in Dinoroseobacter shibae (strain DSM 16493 / NCIMB 14021 / DFL 12).